We begin with the raw amino-acid sequence, 318 residues long: D-alanine--D-alanine ligase (318 aa).

One can recognise an ATP-grasp domain in the interval K117–E315. A146–T201 lines the ATP pocket. 3 residues coordinate Mg(2+): D268, E282, and N284.

Belongs to the D-alanine--D-alanine ligase family. Mg(2+) is required as a cofactor. It depends on Mn(2+) as a cofactor.

Its subcellular location is the cytoplasm. The catalysed reaction is 2 D-alanine + ATP = D-alanyl-D-alanine + ADP + phosphate + H(+). The protein operates within cell wall biogenesis; peptidoglycan biosynthesis. Cell wall formation. This Xanthomonas axonopodis pv. citri (strain 306) protein is D-alanine--D-alanine ligase.